A 562-amino-acid polypeptide reads, in one-letter code: Dihydroxy-acid dehydratase (562 aa).

Asp80 contacts Mg(2+). Cys121 provides a ligand contact to [2Fe-2S] cluster. The Mg(2+) site is built by Asp122 and Lys123. Lys123 is subject to N6-carboxylysine. [2Fe-2S] cluster is bound at residue Cys194. Glu446 contacts Mg(2+). Ser472 acts as the Proton acceptor in catalysis.

It belongs to the IlvD/Edd family. In terms of assembly, homodimer. The cofactor is [2Fe-2S] cluster. Mg(2+) is required as a cofactor.

The catalysed reaction is (2R)-2,3-dihydroxy-3-methylbutanoate = 3-methyl-2-oxobutanoate + H2O. It carries out the reaction (2R,3R)-2,3-dihydroxy-3-methylpentanoate = (S)-3-methyl-2-oxopentanoate + H2O. Its pathway is amino-acid biosynthesis; L-isoleucine biosynthesis; L-isoleucine from 2-oxobutanoate: step 3/4. The protein operates within amino-acid biosynthesis; L-valine biosynthesis; L-valine from pyruvate: step 3/4. Functions in the biosynthesis of branched-chain amino acids. Catalyzes the dehydration of (2R,3R)-2,3-dihydroxy-3-methylpentanoate (2,3-dihydroxy-3-methylvalerate) into 2-oxo-3-methylpentanoate (2-oxo-3-methylvalerate) and of (2R)-2,3-dihydroxy-3-methylbutanoate (2,3-dihydroxyisovalerate) into 2-oxo-3-methylbutanoate (2-oxoisovalerate), the penultimate precursor to L-isoleucine and L-valine, respectively. This is Dihydroxy-acid dehydratase from Staphylococcus aureus (strain Mu50 / ATCC 700699).